The sequence spans 385 residues: Meiosis-specific protein MEI4 (385 aa).

Positions 1-126 (MDVQKWYLRT…LSQHFVESCT (126 aa)) are interaction with REC114. The segment at 86 to 110 (AQEPKSSESTLTSMEDSGCDLSNEQ) is disordered. Residues 92–107 (SESTLTSMEDSGCDLS) show a composition bias toward polar residues.

This sequence belongs to the MEI4L family. Part of the MCD recombinosome complex, at least composed of IHO1, REC114 and MEI4. Forms a complex with REC114; the interaction is required for MEI4 stability. Interacts (via N-terminal domain) with REC114 (via C-terminal domain). Interacts with IHO1.

It localises to the chromosome. Required for DNA double-strand breaks (DSBs) formation in unsynapsed regions during meiotic recombination. Probably acts by forming a complex with IHO1 and REC114, which activates DSBs formation in unsynapsed regions, an essential step to ensure completion of synapsis. The sequence is that of Meiosis-specific protein MEI4 from Homo sapiens (Human).